The sequence spans 153 residues: Deoxyuridine 5'-triphosphate nucleotidohydrolase (153 aa).

Substrate contacts are provided by residues 71 to 73 (RSG), N84, 88 to 90 (LID), and M98.

The protein belongs to the dUTPase family. Requires Mg(2+) as cofactor.

The catalysed reaction is dUTP + H2O = dUMP + diphosphate + H(+). It functions in the pathway pyrimidine metabolism; dUMP biosynthesis; dUMP from dCTP (dUTP route): step 2/2. Functionally, this enzyme is involved in nucleotide metabolism: it produces dUMP, the immediate precursor of thymidine nucleotides and it decreases the intracellular concentration of dUTP so that uracil cannot be incorporated into DNA. The polypeptide is Deoxyuridine 5'-triphosphate nucleotidohydrolase (Hydrogenovibrio crunogenus (strain DSM 25203 / XCL-2) (Thiomicrospira crunogena)).